A 213-amino-acid polypeptide reads, in one-letter code: MLAILDYKAGNQTSVRRALDHLGIPCVITADPEVIQGAAGVIFPGVGAAGQAMNELVTTGLDEVLRRQVQAGRPLLGICVGCQIMLDYSQENDTKALGIIPGECRLFNPAWTDEDGAPIRVPHMGWNRIVQRRPCELLKGIEPEAEFYFVHSYYPAPPEEYVIATCTYGTEFCAIHGGPGLWAVQFHPEKSGRPGLRLLANFHRYCTEAADAQ.

One can recognise a Glutamine amidotransferase type-1 domain in the interval Met1–Ala212. The active-site Nucleophile is the Cys79. Active-site residues include His187 and Glu189.

Heterodimer of HisH and HisF.

The protein resides in the cytoplasm. It catalyses the reaction 5-[(5-phospho-1-deoxy-D-ribulos-1-ylimino)methylamino]-1-(5-phospho-beta-D-ribosyl)imidazole-4-carboxamide + L-glutamine = D-erythro-1-(imidazol-4-yl)glycerol 3-phosphate + 5-amino-1-(5-phospho-beta-D-ribosyl)imidazole-4-carboxamide + L-glutamate + H(+). The catalysed reaction is L-glutamine + H2O = L-glutamate + NH4(+). The protein operates within amino-acid biosynthesis; L-histidine biosynthesis; L-histidine from 5-phospho-alpha-D-ribose 1-diphosphate: step 5/9. In terms of biological role, IGPS catalyzes the conversion of PRFAR and glutamine to IGP, AICAR and glutamate. The HisH subunit catalyzes the hydrolysis of glutamine to glutamate and ammonia as part of the synthesis of IGP and AICAR. The resulting ammonia molecule is channeled to the active site of HisF. This chain is Imidazole glycerol phosphate synthase subunit HisH, found in Nitratidesulfovibrio vulgaris (strain DP4) (Desulfovibrio vulgaris).